The following is a 511-amino-acid chain: 2,3-bisphosphoglycerate-independent phosphoglycerate mutase (511 aa).

Aspartate 12 contacts Mn(2+). Tyrosine 36 is subject to Phosphotyrosine. Residue serine 62 coordinates Mn(2+). The Phosphoserine intermediate role is filled by serine 62. Substrate-binding positions include histidine 123, 153 to 154, arginine 185, arginine 191, 261 to 264, and lysine 336; these read RD and RPDR. Mn(2+) is bound by residues aspartate 403, histidine 407, aspartate 444, histidine 445, and histidine 462.

This sequence belongs to the BPG-independent phosphoglycerate mutase family. Monomer. It depends on Mn(2+) as a cofactor.

It catalyses the reaction (2R)-2-phosphoglycerate = (2R)-3-phosphoglycerate. The protein operates within carbohydrate degradation; glycolysis; pyruvate from D-glyceraldehyde 3-phosphate: step 3/5. In terms of biological role, catalyzes the interconversion of 2-phosphoglycerate and 3-phosphoglycerate. The sequence is that of 2,3-bisphosphoglycerate-independent phosphoglycerate mutase from Geobacillus thermodenitrificans (strain NG80-2).